Here is a 324-residue protein sequence, read N- to C-terminus: DNA repair and recombination protein RadA (324 aa).

ATP is bound at residue Gly-114 to Thr-121.

Belongs to the eukaryotic RecA-like protein family.

Its function is as follows. Involved in DNA repair and in homologous recombination. Binds and assemble on single-stranded DNA to form a nucleoprotein filament. Hydrolyzes ATP in a ssDNA-dependent manner and promotes DNA strand exchange between homologous DNA molecules. This chain is DNA repair and recombination protein RadA, found in Sulfurisphaera tokodaii (strain DSM 16993 / JCM 10545 / NBRC 100140 / 7) (Sulfolobus tokodaii).